The sequence spans 364 residues: CCA-adding enzyme (364 aa).

Residues G19 and R22 each coordinate ATP. Residues G19 and R22 each contribute to the CTP site. Positions 32 and 34 each coordinate Mg(2+). ATP is bound by residues R102, R148, and R151. CTP contacts are provided by R102, R148, and R151.

Belongs to the tRNA nucleotidyltransferase/poly(A) polymerase family. Bacterial CCA-adding enzyme type 2 subfamily. The cofactor is Mg(2+).

It catalyses the reaction a tRNA precursor + 2 CTP + ATP = a tRNA with a 3' CCA end + 3 diphosphate. It carries out the reaction a tRNA with a 3' CCA end + 2 CTP + ATP = a tRNA with a 3' CCACCA end + 3 diphosphate. Catalyzes the addition and repair of the essential 3'-terminal CCA sequence in tRNAs without using a nucleic acid template. Adds these three nucleotides in the order of C, C, and A to the tRNA nucleotide-73, using CTP and ATP as substrates and producing inorganic pyrophosphate. tRNA 3'-terminal CCA addition is required both for tRNA processing and repair. Also involved in tRNA surveillance by mediating tandem CCA addition to generate a CCACCA at the 3' terminus of unstable tRNAs. While stable tRNAs receive only 3'-terminal CCA, unstable tRNAs are marked with CCACCA and rapidly degraded. The chain is CCA-adding enzyme from Bordetella pertussis (strain Tohama I / ATCC BAA-589 / NCTC 13251).